The primary structure comprises 247 residues: PF03932 family protein CutC (247 aa).

Belongs to the CutC family.

It is found in the cytoplasm. This chain is PF03932 family protein CutC, found in Vibrio campbellii (strain ATCC BAA-1116).